Reading from the N-terminus, the 189-residue chain is Protein OPG107 (189 aa).

At 1–28 (MDKTTLSVNACNLEYVREKAIVGVQAAK) the chain is on the intravirion side. A helical; Signal-anchor for type III membrane protein transmembrane segment spans residues 29–49 (TSTLIFFVIILAISALLLWFQ). Residues 50–189 (TSDNPVFNEL…HWCSDFSNME (140 aa)) are Virion surface-facing.

This sequence belongs to the orthopoxvirus OPG107 family. As to quaternary structure, part of a stable entry-fusion complex (EFC) which is at least composed of proteins OPG143, OPG147, OPG155, OPG86, OPG94, OPG107, OPG104, and OPG099. Formation of the viral membrane is necessary for the assembly of the complex. In terms of processing, contains two intramolecular disulfide bonds. They are created by the viral disulfide bond formation pathway, a poxvirus-specific pathway that operates on the cytoplasmic side of the MV membranes.

The protein localises to the virion membrane. Its subcellular location is the host endoplasmic reticulum membrane. Envelope protein part of the entry-fusion complex responsible for the virus membrane fusion with host cell membrane during virus entry. Also plays a role in cell-cell fusion (syncytium formation). The chain is Protein OPG107 (OPG107) from Bos taurus (Bovine).